The chain runs to 126 residues: Small ribosomal subunit protein uS11 (126 aa).

Belongs to the universal ribosomal protein uS11 family. Part of the 30S ribosomal subunit. Interacts with proteins S7 and S18. Binds to IF-3.

Functionally, located on the platform of the 30S subunit, it bridges several disparate RNA helices of the 16S rRNA. Forms part of the Shine-Dalgarno cleft in the 70S ribosome. The chain is Small ribosomal subunit protein uS11 from Ehrlichia chaffeensis (strain ATCC CRL-10679 / Arkansas).